The sequence spans 262 residues: Adenosylcobinamide-GDP ribazoletransferase (262 aa).

A run of 6 helical transmembrane segments spans residues tyrosine 43–glutamine 63, leucine 66–phenylalanine 86, glycine 120–leucine 140, alanine 146–phenylalanine 166, leucine 191–leucine 211, and alanine 242–leucine 262.

The protein belongs to the CobS family. It depends on Mg(2+) as a cofactor.

The protein resides in the cell inner membrane. The catalysed reaction is alpha-ribazole + adenosylcob(III)inamide-GDP = adenosylcob(III)alamin + GMP + H(+). The enzyme catalyses alpha-ribazole 5'-phosphate + adenosylcob(III)inamide-GDP = adenosylcob(III)alamin 5'-phosphate + GMP + H(+). It functions in the pathway cofactor biosynthesis; adenosylcobalamin biosynthesis; adenosylcobalamin from cob(II)yrinate a,c-diamide: step 7/7. Its function is as follows. Joins adenosylcobinamide-GDP and alpha-ribazole to generate adenosylcobalamin (Ado-cobalamin). Also synthesizes adenosylcobalamin 5'-phosphate from adenosylcobinamide-GDP and alpha-ribazole 5'-phosphate. This chain is Adenosylcobinamide-GDP ribazoletransferase, found in Shewanella baltica (strain OS185).